A 63-amino-acid chain; its full sequence is MSRVDWFRGVGPMSGNTRSHAMNASRRKFNVNLQKVRVDFGSGKRTLRISTKTLKTWRKKGLI.

It belongs to the bacterial ribosomal protein bL28 family.

The polypeptide is Large ribosomal subunit protein bL28 (Mycoplasmopsis synoviae (strain 53) (Mycoplasma synoviae)).